The chain runs to 330 residues: DNA-directed RNA polymerase subunit alpha (330 aa).

Residues 1–237 (MYTEINEMLT…RQLHAFVDMK (237 aa)) are alpha N-terminal domain (alpha-NTD). Residues 251–330 (FDPVLLRSVD…ENWPPASLGE (80 aa)) are alpha C-terminal domain (alpha-CTD).

The protein belongs to the RNA polymerase alpha chain family. As to quaternary structure, homodimer. The RNAP catalytic core consists of 2 alpha, 1 beta, 1 beta' and 1 omega subunit. When a sigma factor is associated with the core the holoenzyme is formed, which can initiate transcription.

It catalyses the reaction RNA(n) + a ribonucleoside 5'-triphosphate = RNA(n+1) + diphosphate. Its function is as follows. DNA-dependent RNA polymerase catalyzes the transcription of DNA into RNA using the four ribonucleoside triphosphates as substrates. This is DNA-directed RNA polymerase subunit alpha from Legionella pneumophila (strain Paris).